A 196-amino-acid chain; its full sequence is Ribosome maturation factor RimP (196 aa).

This sequence belongs to the RimP family.

The protein resides in the cytoplasm. Its function is as follows. Required for maturation of 30S ribosomal subunits. The chain is Ribosome maturation factor RimP from Lawsonia intracellularis (strain PHE/MN1-00).